The chain runs to 325 residues: Large ribosomal subunit protein uL1m (325 aa).

Residues 1–50 (MAATVRCFGRVLIHHQRCSLATVTSQTSLYPCCIYVPVPNRHFAAAAKPA) constitute a mitochondrion transit peptide. Positions 47–66 (AKPAKKTKKGTKEKASNEKK) are disordered. Residues 56-66 (GTKEKASNEKK) show a composition bias toward basic and acidic residues.

This sequence belongs to the universal ribosomal protein uL1 family.

Its subcellular location is the mitochondrion. The chain is Large ribosomal subunit protein uL1m (MRPL1) from Bos taurus (Bovine).